The sequence spans 402 residues: uncharacterized protein (402 aa).

The protein belongs to the peptidase M20 family.

This is an uncharacterized protein from Sinorhizobium fredii (strain NBRC 101917 / NGR234).